We begin with the raw amino-acid sequence, 365 residues long: LIM and cysteine-rich domains protein 1 (365 aa).

At Ser16 the chain carries Phosphoserine. The PET domain maps to 99–206; the sequence is MIMTNPIATG…GEVALPGQGG (108 aa). Positions 200–235 are disordered; that stretch reads ALPGQGGLPKEEGKQQEKPEGAETTAATTNGSLSDP. Positions 208–220 are enriched in basic and acidic residues; that stretch reads PKEEGKQQEKPEG. LIM zinc-binding domains follow at residues 241 to 306 and 307 to 365; these read YVCE…SLRP and RCSG…SKRS.

As to quaternary structure, interacts with GATA1 and GATA4. Interacts with beta-dystroglycan. Interacts with GATA6. In terms of tissue distribution, expressed in the heart (at protein level). Expressed in many tissues with highest abundance in skeletal muscle.

Its subcellular location is the cytoplasm. The protein localises to the nucleus. Functionally, transcriptional cofactor that restricts GATA6 function by inhibiting DNA-binding, resulting in repression of GATA6 transcriptional activation of downstream target genes. Represses GATA6-mediated trans activation of lung- and cardiac tissue-specific promoters. Inhibits DNA-binding by GATA4 and GATA1 to the cTNC promoter. Plays a critical role in the development of cardiac hypertrophy via activation of calcineurin/nuclear factor of activated T-cells signaling pathway. This chain is LIM and cysteine-rich domains protein 1 (LMCD1), found in Homo sapiens (Human).